A 159-amino-acid chain; its full sequence is Major latex protein 146 (159 aa).

This sequence belongs to the MLP family. In terms of tissue distribution, laticifer.

The protein localises to the vacuole. The protein resides in the cytoplasmic vesicle. In terms of biological role, not known; MLPs constitute up to 50% of the soluble latex protein. In Papaver somniferum (Opium poppy), this protein is Major latex protein 146 (MLP146).